The sequence spans 234 residues: Segregation and condensation protein A (234 aa).

The protein belongs to the ScpA family. In terms of assembly, component of a cohesin-like complex composed of ScpA, ScpB and the Smc homodimer, in which ScpA and ScpB bind to the head domain of Smc. The presence of the three proteins is required for the association of the complex with DNA.

The protein resides in the cytoplasm. In terms of biological role, participates in chromosomal partition during cell division. May act via the formation of a condensin-like complex containing Smc and ScpB that pull DNA away from mid-cell into both cell halves. This is Segregation and condensation protein A from Streptococcus pyogenes serotype M6 (strain ATCC BAA-946 / MGAS10394).